The sequence spans 421 residues: Tyrosine--tRNA ligase (421 aa).

Tyr38 contributes to the L-tyrosine binding site. Positions 43-52 (PTGDSLHIGH) match the 'HIGH' region motif. L-tyrosine-binding residues include Tyr169 and Gln173. The 'KMSKS' region signature appears at 231-235 (KFGKS). Lys234 is a binding site for ATP. The S4 RNA-binding domain occupies 353–419 (KNLVDFLVDT…GKKKYTLVHI (67 aa)).

It belongs to the class-I aminoacyl-tRNA synthetase family. TyrS type 1 subfamily. Homodimer.

It localises to the cytoplasm. The catalysed reaction is tRNA(Tyr) + L-tyrosine + ATP = L-tyrosyl-tRNA(Tyr) + AMP + diphosphate + H(+). Its function is as follows. Catalyzes the attachment of tyrosine to tRNA(Tyr) in a two-step reaction: tyrosine is first activated by ATP to form Tyr-AMP and then transferred to the acceptor end of tRNA(Tyr). This Lactobacillus delbrueckii subsp. bulgaricus (strain ATCC 11842 / DSM 20081 / BCRC 10696 / JCM 1002 / NBRC 13953 / NCIMB 11778 / NCTC 12712 / WDCM 00102 / Lb 14) protein is Tyrosine--tRNA ligase.